Consider the following 337-residue polypeptide: Aspartate carbamoyltransferase catalytic subunit (337 aa).

2 residues coordinate carbamoyl phosphate: R54 and T55. K82 lines the L-aspartate pocket. Carbamoyl phosphate is bound by residues R104, H134, and Q137. The L-aspartate site is built by R177 and R232. Carbamoyl phosphate-binding residues include G277 and P278.

This sequence belongs to the aspartate/ornithine carbamoyltransferase superfamily. ATCase family. In terms of assembly, heterododecamer (2C3:3R2) of six catalytic PyrB chains organized as two trimers (C3), and six regulatory PyrI chains organized as three dimers (R2).

The enzyme catalyses carbamoyl phosphate + L-aspartate = N-carbamoyl-L-aspartate + phosphate + H(+). It participates in pyrimidine metabolism; UMP biosynthesis via de novo pathway; (S)-dihydroorotate from bicarbonate: step 2/3. Catalyzes the condensation of carbamoyl phosphate and aspartate to form carbamoyl aspartate and inorganic phosphate, the committed step in the de novo pyrimidine nucleotide biosynthesis pathway. This Arthrobacter sp. (strain FB24) protein is Aspartate carbamoyltransferase catalytic subunit.